We begin with the raw amino-acid sequence, 248 residues long: Glutamine-binding periplasmic protein (248 aa).

A signal peptide spans 1 to 22 (MKSVLKVSLAALTLAFAVSSHA).

Belongs to the bacterial solute-binding protein 3 family.

It is found in the periplasm. Its function is as follows. Involved in a glutamine-transport system GlnHPQ. This chain is Glutamine-binding periplasmic protein (glnH), found in Escherichia coli O157:H7.